Consider the following 686-residue polypeptide: Potassium-transporting ATPase ATP-binding subunit 2 (686 aa).

4 helical membrane-spanning segments follow: residues 37 to 57 (MFVVEIGAIISLALCFFPNLF), 64 to 84 (MILYNSLVFIILLLTLLFANF), 223 to 243 (LLVSLTIIFLIVIVSLYPMAI), and 255 to 275 (VALTVCLIPTTIGGLLSAIGI). D306 serves as the catalytic 4-aspartylphosphate intermediate. ATP contacts are provided by residues D343, E347, 376 to 383 (FTAQTRMS), and K395. Mg(2+)-binding residues include D518 and D522. Transmembrane regions (helical) follow at residues 588 to 608 (FAIIPAMFLAIIPQMQVLNIM), 616 to 636 (AILSALIFNAIIIPCLIPLAM), and 656 to 676 (VYGVGGMIVPFIGIKLIDLVI).

It belongs to the cation transport ATPase (P-type) (TC 3.A.3) family. Type IA subfamily. As to quaternary structure, the system is composed of three essential subunits: KdpA, KdpB and KdpC.

It localises to the cell membrane. It catalyses the reaction K(+)(out) + ATP + H2O = K(+)(in) + ADP + phosphate + H(+). Its function is as follows. Part of the high-affinity ATP-driven potassium transport (or Kdp) system, which catalyzes the hydrolysis of ATP coupled with the electrogenic transport of potassium into the cytoplasm. This subunit is responsible for energy coupling to the transport system and for the release of the potassium ions to the cytoplasm. The polypeptide is Potassium-transporting ATPase ATP-binding subunit 2 (Listeria innocua serovar 6a (strain ATCC BAA-680 / CLIP 11262)).